The following is a 452-amino-acid chain: Tripartite motif-containing protein 49D (452 aa).

The RING-type zinc finger occupies 15–56 (CPICLNYFIDPVTIDCGHSFCRPCFYLNWQDIPILTQCFECL). Residues 88–129 (SEEQMCGTHRETKKIFCEVDRSLLCLLCSSSLEHRYHRHCPA) form a B box-type zinc finger. Zn(2+) contacts are provided by Cys93, His96, Cys115, and His121. The 184-residue stretch at 269-452 (ELRAGPITGL…LRPIFCCVHL (184 aa)) folds into the B30.2/SPRY domain.

The protein belongs to the TRIM/RBCC family.

The sequence is that of Tripartite motif-containing protein 49D from Homo sapiens (Human).